We begin with the raw amino-acid sequence, 511 residues long: 2,3-bisphosphoglycerate-independent phosphoglycerate mutase (511 aa).

2 residues coordinate Mn(2+): Asp-14 and Ser-64. The active-site Phosphoserine intermediate is the Ser-64. Substrate contacts are provided by residues His-125, 155–156, Arg-187, Arg-193, 259–262, and Lys-333; these read RD and RADR. Residues Asp-400, His-404, Asp-441, His-442, and His-460 each contribute to the Mn(2+) site.

This sequence belongs to the BPG-independent phosphoglycerate mutase family. In terms of assembly, monomer. The cofactor is Mn(2+).

It catalyses the reaction (2R)-2-phosphoglycerate = (2R)-3-phosphoglycerate. It participates in carbohydrate degradation; glycolysis; pyruvate from D-glyceraldehyde 3-phosphate: step 3/5. In terms of biological role, catalyzes the interconversion of 2-phosphoglycerate and 3-phosphoglycerate. This Pseudoalteromonas atlantica (strain T6c / ATCC BAA-1087) protein is 2,3-bisphosphoglycerate-independent phosphoglycerate mutase.